Here is a 1354-residue protein sequence, read N- to C-terminus: RNA-directed RNA polymerase VP1 (1354 aa).

It carries out the reaction RNA(n) + a ribonucleoside 5'-triphosphate = RNA(n+1) + diphosphate. Its function is as follows. RNA-directed RNA polymerase that is involved in transcription and genome replication. Following infection, it catalyzes the synthesis of fully conservative plus strands. After core assembly, which consists in recruitment of one capped plus-strand for each genomic segments and polymerase complexes, the polymerase switches mode and catalyzes the synthesis of complementary minus-strands. This is RNA-directed RNA polymerase VP1 from Cryphonectria parasitica mycoreovirus 1 (strain 9B21) (CpMYRV-1).